A 186-amino-acid chain; its full sequence is Fucolectin-6 (186 aa).

The first 32 residues, 1 to 32 (MKTCNLTDRMKVKMIMLLFQILAISTLQSVSA), serve as a signal peptide directing secretion. Positions 40-186 (QENVAVRGKA…VEVNAMLPAN (147 aa)) are F5/8 type C-like. Ca(2+) is bound by residues Asn67, Asp70, Asn72, and Ser81. Cystine bridges form between Cys82–Cys175, Cys114–Cys115, and Cys137–Cys153. Residues His84 and Arg111 each contribute to the alpha-L-fucose site. A Cell attachment site motif is present at residues 111–113 (RGD). Arg118 serves as a coordination point for alpha-L-fucose. Ca(2+) is bound by residues Cys175 and Glu176.

It belongs to the fucolectin family. As to quaternary structure, homotrimer. In terms of tissue distribution, gill mucous cells.

It is found in the secreted. In terms of biological role, acts as a defensive agent. Recognizes blood group fucosylated oligosaccharides including A, B, H and Lewis B-type antigens. Does not recognize Lewis A antigen and has low affinity for monovalent haptens. The sequence is that of Fucolectin-6 from Anguilla japonica (Japanese eel).